Consider the following 377-residue polypeptide: MPRSVTADASGSFLTLTFEDGSESRFHAIWLRDNALDPETRSPGNGQRLITIGDIPADTRISTALVDDGALTVTFAPEGKTVTFPGKWLKSNAYDTDQSSEVGRTSPDVETWDSSQPAPAFDWNEVQSDPKAKRDWLDAIARLGFAKLVNGPVREGALIECASMFGFVRETNYGKYFEVRTEVNPTNLAYTGLGLQAHTDNPYRDPVPSLQILYCLENSAEGGDSIVVDGFRAAERLRDEDPEGFALLAGNPARFEYKGSDGVHLRARRPMIELSPDGEMIAIRFNNRSSAPFVDIPFEKMEAYYAAYRRLGEFIDDPEMGVSFKLEPGESFIVDNTRVLHARLGYSGSGSRWLQGCYADKDGLFSTLNVLNAQLGG.

Residues 95–119 are disordered; it reads DTDQSSEVGRTSPDVETWDSSQPAP. Asn-187 lines the [2-(trimethylamino)ethyl]phosphonate pocket. 2-oxoglutarate is bound at residue His-198. His-198 and Asp-200 together coordinate Fe(2+). 5 residues coordinate [2-(trimethylamino)ethyl]phosphonate: Asp-200, Asn-201, Tyr-203, Asn-286, and Arg-288. Positions 341, 343, and 352 each coordinate 2-oxoglutarate. His-341 contributes to the Fe(2+) binding site.

The protein belongs to the gamma-BBH/TMLD family. In terms of assembly, homodimer. Requires Fe(2+) as cofactor. The cofactor is L-ascorbate.

The enzyme catalyses [2-(trimethylamino)ethyl]phosphonate + 2-oxoglutarate + O2 = [(1R)-1-hydroxy-2-(trimethylamino)ethyl]phosphonate + succinate + CO2. Involved in the degradation of the naturally occurring organophosphonate 2-(trimethylammonio)ethylphosphonate (TMAEP). Catalyzes the hydroxylation of TMAEP to (R)-1-hydroxy-2-(trimethylammonio)ethylphosphonate (OH-TMAEP). Is highly specific for its N-trimethylated substrate. Cannot use gamma-butyrobetaine as substrate. The polypeptide is [2-(trimethylamino)ethyl]phosphonate dioxygenase (Leisingera caerulea (Phaeobacter caeruleus)).